A 125-amino-acid chain; its full sequence is Temptin (125 aa).

An N-terminal signal peptide occupies residues 1 to 22; sequence MEQKRTLRVFLAVSLLCALANA. 2 cysteine pairs are disulfide-bonded: cysteine 40–cysteine 125 and cysteine 79–cysteine 99. The disordered stretch occupies residues 78-125; the sequence is LCDMDSDGDGRSNGVELGDPECVWSQGETPARTTDLSHPGFDEATVSC. Residues 103 to 113 are compositionally biased toward polar residues; sequence QGETPARTTDL.

In terms of assembly, binds to attractin and enticin. In terms of tissue distribution, produced by the albumen gland of the egg cordons.

The protein localises to the secreted. Functionally, a component of the complex of water-borne protein pheromones that stimulates attraction and mating behavior. Modulates pheromone signaling by direct binding to attractin. This is Temptin from Aplysia californica (California sea hare).